A 172-amino-acid chain; its full sequence is Melanocortin-2 receptor accessory protein (172 aa).

A helical membrane pass occupies residues 38 to 58; sequence IVIAFWVSLAAFVVLLFLILL. 2 disordered regions span residues 105-130 and 152-172; these read QAQASSVEPGSRTGPDQPLRQESSST and PLVRSKPSEPPPGDRTSQLQS.

It belongs to the MRAP family. In terms of assembly, homodimer and heterodimer. Forms antiparallel homodimers and heterodimers with MRAP2. Interacts with MC1R, MC2R, MC3R, MC4R and MC5R.

Its subcellular location is the cell membrane. It localises to the endoplasmic reticulum membrane. In terms of biological role, modulator of melanocortin receptors (MC1R, MC2R, MC3R, MC4R and MC5R). Acts by increasing ligand-sensitivity of melanocortin receptors and enhancing generation of cAMP by the receptors. Required both for MC2R trafficking to the cell surface of adrenal cells and for signaling in response to corticotropin (ACTH). May be involved in the intracellular trafficking pathways in adipocyte cells. The protein is Melanocortin-2 receptor accessory protein (MRAP) of Pan troglodytes (Chimpanzee).